A 595-amino-acid polypeptide reads, in one-letter code: APOBEC1 complementation factor (595 aa).

3 RRM domains span residues 56–134, 136–218, and 231–303; these read CEIF…ASVD, CRLF…WAEP, and KILY…LAKP. A required for nuclear localization region spans residues 360 to 409; the sequence is HFPATKGHLSNRALIRTPSVREIYMNVPVGAAGVRGLGGRGYLAYTGLGR.

In terms of assembly, part of the apolipoprotein B mRNA editing complex with APOBEC1. Interacts with TNPO2; TNPO2 may be responsible for transport of A1CF into the nucleus. Interacts with SYNCRIP. Interacts with CELF2/CUGBP2. Interacts with RBM47. In terms of tissue distribution, expressed primarily in liver, small intestine and kidney.

The protein localises to the nucleus. It is found in the endoplasmic reticulum. Its subcellular location is the cytoplasm. In terms of biological role, essential component of the apolipoprotein B mRNA editing enzyme complex which is responsible for the postranscriptional editing of a CAA codon for Gln to a UAA codon for stop in APOB mRNA. Binds to APOB mRNA and is probably responsible for docking the catalytic subunit, APOBEC1, to the mRNA to allow it to deaminate its target cytosine. The complex also seems to protect the edited APOB mRNA from nonsense-mediated decay. This chain is APOBEC1 complementation factor (A1cf), found in Mus musculus (Mouse).